We begin with the raw amino-acid sequence, 203 residues long: SPbeta prophage-derived uncharacterized protein YouA (203 aa).

The tract at residues 1–23 (MAFLNQDGDKYTSAKDDGTGNPI) is disordered. The segment covering 7–18 (DGDKYTSAKDDG) has biased composition (basic and acidic residues).

The sequence is that of SPbeta prophage-derived uncharacterized protein YouA (youA) from Bacillus subtilis (strain 168).